A 391-amino-acid polypeptide reads, in one-letter code: 5-amino-6-(D-ribitylamino)uracil--L-tyrosine 4-hydroxyphenyl transferase (391 aa).

The 248-residue stretch at 55 to 302 (VTYVINRNIN…GAVARIYLGN (248 aa)) folds into the Radical SAM core domain. The [4Fe-4S] cluster site is built by Cys69, Cys73, and Cys76.

Belongs to the radical SAM superfamily. CofH family. In terms of assembly, consists of two subunits, CofG and CofH. [4Fe-4S] cluster is required as a cofactor.

It catalyses the reaction 5-amino-6-(D-ribitylamino)uracil + L-tyrosine + S-adenosyl-L-methionine = 5-amino-5-(4-hydroxybenzyl)-6-(D-ribitylimino)-5,6-dihydrouracil + 2-iminoacetate + 5'-deoxyadenosine + L-methionine + H(+). Its pathway is cofactor biosynthesis; coenzyme F0 biosynthesis. In terms of biological role, catalyzes the radical-mediated synthesis of 5-amino-5-(4-hydroxybenzyl)-6-(D-ribitylimino)-5,6-dihydrouracil from 5-amino-6-(D-ribitylamino)uracil and L-tyrosine. This Trichormus variabilis (strain ATCC 29413 / PCC 7937) (Anabaena variabilis) protein is 5-amino-6-(D-ribitylamino)uracil--L-tyrosine 4-hydroxyphenyl transferase.